A 179-amino-acid polypeptide reads, in one-letter code: uncharacterized protein (179 aa).

4 consecutive transmembrane segments (helical) span residues 33–53 (HIIA…VILD), 63–83 (VMFI…MLVL), 89–109 (ITAS…FVLT), and 115–135 (FSPF…EYFF).

Its subcellular location is the cell membrane. This is an uncharacterized protein from Bacillus subtilis (strain 168).